The following is a 313-amino-acid chain: Probable RuBisCO transcriptional regulator (313 aa).

The 58-residue stretch at 6–63 (FTLDQLLILKAIAAQGSFKKAADSLYISQPAVSMQVQNIEKQLNVQLLDRGGRRANLT) folds into the HTH lysR-type domain. Positions 23 to 42 (FKKAADSLYISQPAVSMQVQ) form a DNA-binding region, H-T-H motif.

It belongs to the LysR transcriptional regulatory family.

It localises to the plastid. It is found in the chloroplast. Trans-acting transcriptional regulator of RuBisCO genes (rbcL and rbcS) expression. This Chlorokybus atmophyticus (Soil alga) protein is Probable RuBisCO transcriptional regulator (rbcR).